The following is a 291-amino-acid chain: Ribose-phosphate pyrophosphokinase (291 aa).

ATP contacts are provided by residues 34–36 (DGE) and 93–94 (RQ). Mg(2+) is bound by residues His127 and Asp165. Lys188 is a catalytic residue. D-ribose 5-phosphate is bound by residues Arg190, Asp216, and 220-224 (STGGT).

It belongs to the ribose-phosphate pyrophosphokinase family. Class III (archaeal) subfamily. Requires Mg(2+) as cofactor.

The protein resides in the cytoplasm. It catalyses the reaction D-ribose 5-phosphate + ATP = 5-phospho-alpha-D-ribose 1-diphosphate + AMP + H(+). It functions in the pathway metabolic intermediate biosynthesis; 5-phospho-alpha-D-ribose 1-diphosphate biosynthesis; 5-phospho-alpha-D-ribose 1-diphosphate from D-ribose 5-phosphate (route I): step 1/1. Involved in the biosynthesis of the central metabolite phospho-alpha-D-ribosyl-1-pyrophosphate (PRPP) via the transfer of pyrophosphoryl group from ATP to 1-hydroxyl of ribose-5-phosphate (Rib-5-P). The sequence is that of Ribose-phosphate pyrophosphokinase from Sulfolobus acidocaldarius (strain ATCC 33909 / DSM 639 / JCM 8929 / NBRC 15157 / NCIMB 11770).